The chain runs to 281 residues: Transmembrane protein 41A-A (281 aa).

An N-terminal signal peptide occupies residues M1–S22. The interval H32–S56 is disordered. Residues Q34 to D47 show a composition bias toward basic and acidic residues. 5 consecutive transmembrane segments (helical) span residues G84–G104, F107–V127, L170–M190, I197–C217, and W236–I256.

The protein belongs to the TMEM41 family.

The protein localises to the membrane. The polypeptide is Transmembrane protein 41A-A (tmem41aa) (Danio rerio (Zebrafish)).